Here is a 1132-residue protein sequence, read N- to C-terminus: Fas-binding factor 1 homolog (1132 aa).

Disordered stretches follow at residues 18–50, 65–84, and 89–570; these read DDLL…LQAS, AEDM…PQAV, and KEMD…QSYE. Over residues 35–46 the composition is skewed to low complexity; that stretch reads AGVSSGRARGSS. Basic and acidic residues-rich tracts occupy residues 134 to 148 and 189 to 206; these read APEK…DKKP and GSER…EKDP. Acidic residues predominate over residues 226–235; sequence TFEDDDDDMM. Composition is skewed to basic and acidic residues over residues 244–270 and 278–303; these read QKGD…DELL and ILER…PEKE. Polar residues-rich tracts occupy residues 331–341 and 388–410; these read RQSVSRFSAEN and AKTS…SKPN. Low complexity-rich tracts occupy residues 458–480 and 511–520; these read ATST…ADSS and PSDPAASSPA. The segment covering 534–548 has biased composition (polar residues); it reads TMPSTPLQAASQLQA. 3 coiled-coil regions span residues 576–727, 769–882, and 918–1044; these read RAAL…TSAT, ARQR…LAVE, and LAKE…HKKL.

The protein resides in the cytoplasm. It is found in the cytoskeleton. The protein localises to the microtubule organizing center. Its subcellular location is the centrosome. It localises to the centriole. The protein resides in the spindle pole. It is found in the cell junction. In terms of biological role, keratin-binding protein required for epithelial cell polarization. Required for ciliogenesis. The polypeptide is Fas-binding factor 1 homolog (FBF1) (Gallus gallus (Chicken)).